A 187-amino-acid polypeptide reads, in one-letter code: Decorin-binding protein B (187 aa).

The first 20 residues, 1-20 (MKIGKLNSIVIALFFKLLVA), serve as a signal peptide directing secretion.

Belongs to the decorin-binding protein family.

Binds to decorin which may mediate the adherence of B.burgdorferi to collagen fibers in skin and other tissues. This Borreliella burgdorferi (strain ATCC 35210 / DSM 4680 / CIP 102532 / B31) (Borrelia burgdorferi) protein is Decorin-binding protein B (dbpB).